The following is a 299-amino-acid chain: Pyridoxal 5'-phosphate synthase subunit PdxS (299 aa).

D-ribose 5-phosphate is bound at residue Asp29. Lys86 functions as the Schiff-base intermediate with D-ribose 5-phosphate in the catalytic mechanism. Position 158 (Gly158) interacts with D-ribose 5-phosphate. Arg170 is a D-glyceraldehyde 3-phosphate binding site. D-ribose 5-phosphate contacts are provided by residues Gly219 and 240 to 241 (GS).

Belongs to the PdxS/SNZ family. As to quaternary structure, in the presence of PdxT, forms a dodecamer of heterodimers.

It catalyses the reaction aldehydo-D-ribose 5-phosphate + D-glyceraldehyde 3-phosphate + L-glutamine = pyridoxal 5'-phosphate + L-glutamate + phosphate + 3 H2O + H(+). Its pathway is cofactor biosynthesis; pyridoxal 5'-phosphate biosynthesis. In terms of biological role, catalyzes the formation of pyridoxal 5'-phosphate from ribose 5-phosphate (RBP), glyceraldehyde 3-phosphate (G3P) and ammonia. The ammonia is provided by the PdxT subunit. Can also use ribulose 5-phosphate and dihydroxyacetone phosphate as substrates, resulting from enzyme-catalyzed isomerization of RBP and G3P, respectively. The polypeptide is Pyridoxal 5'-phosphate synthase subunit PdxS (Mycobacterium bovis (strain ATCC BAA-935 / AF2122/97)).